The sequence spans 61 residues: U-scoloptoxin(14)-Sm1a (61 aa).

Positions 1 to 24 are cleaved as a signal peptide; that stretch reads MNPKLCMLLLVCLMAFYVIETVQA.

It belongs to the scoloptoxin-14 family. Post-translationally, contains 4 disulfide bonds. As to expression, expressed by the venom gland.

Its subcellular location is the secreted. The sequence is that of U-scoloptoxin(14)-Sm1a from Scolopendra morsitans (Tanzanian blue ringleg centipede).